The chain runs to 164 residues: Putative anionic 4-hydroxy-benzoate permease (164 aa).

The tract at residues 1 to 30 (CGRRRGSLAWPDASSPSANPRPGAGAAESS) is disordered. 3 helical membrane-spanning segments follow: residues 62 to 82 (LWVA…LMFM), 97 to 117 (GMAQ…VGGL), and 126 to 146 (PALT…MLAG).

This sequence belongs to the major facilitator superfamily. Cyanate porter (TC 2.A.1.17) family.

It is found in the cell membrane. May be involved in uptake of anionic 4-hydroxy-benzoate. The protein is Putative anionic 4-hydroxy-benzoate permease of Thauera aromatica.